The sequence spans 326 residues: Zinc transporter 11 (326 aa).

Residues 1–20 form the signal peptide; the sequence is MSRSLVFFFLFLVLVVPCLS. Residues 21-49 lie on the Extracellular side of the membrane; sequence HGTGGDHDDDEASHVKSSDLKSKSLISVK. The chain crosses the membrane as a helical span at residues 50-70; it reads IACLVIIFVLTFISGVSPYFL. The Cytoplasmic portion of the chain corresponds to 71-75; it reads KWSQG. The helical transmembrane segment at 76-96 threads the bilayer; sequence FLVLGTQFAGGVFLATALMHF. Residues 97 to 121 are Extracellular-facing; sequence LSDADETFRGLLTAEGESEPSPAYP. A helical transmembrane segment spans residues 122–142; the sequence is FAYMLACAGFMLTMLADSVIA. Residues 143-174 lie on the Cytoplasmic side of the membrane; the sequence is HIYSKTQNDLELQGEDKSNQRSATTETSIGDS. The helical transmembrane segment at 175 to 195 threads the bilayer; that stretch reads ILLIVALCFHSVFEGIAIGIS. The Extracellular portion of the chain corresponds to 196-203; sequence ETKSDAWR. The chain crosses the membrane as a helical span at residues 204-224; sequence ALWTITLHKIFAAIAMGIALL. Residues 225–235 are Cytoplasmic-facing; sequence RMIPDRPLFSS. Residues 236 to 256 traverse the membrane as a helical segment; the sequence is ITYSFAFAISSPIGVAIGIVI. Residues 257 to 262 are Extracellular-facing; the sequence is DATTQG. A helical transmembrane segment spans residues 263–283; it reads SIADWIFALSMSLACGVFVYV. Topologically, residues 284–305 are cytoplasmic; that stretch reads SVNHLLAKGYRPNKKVHVDEPR. A helical transmembrane segment spans residues 306–326; sequence YKFLAVLFGVVVIAIVMIWDT.

This sequence belongs to the ZIP transporter (TC 2.A.5) family.

It is found in the cell membrane. Functionally, probably mediates zinc uptake from the rhizosphere. The polypeptide is Zinc transporter 11 (ZIP11) (Arabidopsis thaliana (Mouse-ear cress)).